A 383-amino-acid chain; its full sequence is Queuine tRNA-ribosyltransferase (383 aa).

Asp-90 acts as the Proton acceptor in catalysis. Substrate contacts are provided by residues 90-94 (DSGGF), Asp-144, Gln-193, and Gly-227. The interval 258–264 (GVGTPED) is RNA binding. Asp-277 serves as the catalytic Nucleophile. Positions 282–286 (TRNAR) are RNA binding; important for wobble base 34 recognition. Cys-315, Cys-317, Cys-320, and His-346 together coordinate Zn(2+).

Belongs to the queuine tRNA-ribosyltransferase family. Homodimer. Within each dimer, one monomer is responsible for RNA recognition and catalysis, while the other monomer binds to the replacement base PreQ1. Zn(2+) is required as a cofactor.

The catalysed reaction is 7-aminomethyl-7-carbaguanine + guanosine(34) in tRNA = 7-aminomethyl-7-carbaguanosine(34) in tRNA + guanine. Its pathway is tRNA modification; tRNA-queuosine biosynthesis. In terms of biological role, catalyzes the base-exchange of a guanine (G) residue with the queuine precursor 7-aminomethyl-7-deazaguanine (PreQ1) at position 34 (anticodon wobble position) in tRNAs with GU(N) anticodons (tRNA-Asp, -Asn, -His and -Tyr). Catalysis occurs through a double-displacement mechanism. The nucleophile active site attacks the C1' of nucleotide 34 to detach the guanine base from the RNA, forming a covalent enzyme-RNA intermediate. The proton acceptor active site deprotonates the incoming PreQ1, allowing a nucleophilic attack on the C1' of the ribose to form the product. After dissociation, two additional enzymatic reactions on the tRNA convert PreQ1 to queuine (Q), resulting in the hypermodified nucleoside queuosine (7-(((4,5-cis-dihydroxy-2-cyclopenten-1-yl)amino)methyl)-7-deazaguanosine). This Ralstonia pickettii (strain 12J) protein is Queuine tRNA-ribosyltransferase.